We begin with the raw amino-acid sequence, 302 residues long: 1,2-dihydroxynaphthalene dioxygenase (302 aa).

2 VOC domains span residues 9–124 (ELGY…IFWG) and 149–270 (GLGH…PGWR). His152 serves as a coordination point for Fe cation. Residues His152, 199-200 (DH), His215, and Tyr256 each bind substrate. A Fe cation-binding site is contributed by His215. Residue Glu266 participates in Fe cation binding.

This sequence belongs to the extradiol ring-cleavage dioxygenase family. It depends on Fe(2+) as a cofactor.

It catalyses the reaction naphthalene-1,2-diol + O2 = 2-hydroxychromene-2-carboxylate + H(+). Its pathway is aromatic compound metabolism; naphthalene degradation. Functionally, involved in the naphthalene catabolic pathway. Catalyzes the meta-cleavage of 1,2-dihydroxynaphthalene (1,2-DHN) to yield 2-hydroxychromene-2-carboxylic acid. The chain is 1,2-dihydroxynaphthalene dioxygenase (nahC) from Pseudomonas putida (Arthrobacter siderocapsulatus).